Reading from the N-terminus, the 340-residue chain is 4-hydroxy-3-methylbut-2-enyl diphosphate reductase (340 aa).

Cys21 is a [4Fe-4S] cluster binding site. Residues His50 and His83 each coordinate (2E)-4-hydroxy-3-methylbut-2-enyl diphosphate. Residues His50 and His83 each coordinate dimethylallyl diphosphate. Isopentenyl diphosphate is bound by residues His50 and His83. A [4Fe-4S] cluster-binding site is contributed by Cys105. (2E)-4-hydroxy-3-methylbut-2-enyl diphosphate is bound at residue His133. Residue His133 participates in dimethylallyl diphosphate binding. His133 serves as a coordination point for isopentenyl diphosphate. The Proton donor role is filled by Glu135. Thr173 is a binding site for (2E)-4-hydroxy-3-methylbut-2-enyl diphosphate. Cys203 provides a ligand contact to [4Fe-4S] cluster. (2E)-4-hydroxy-3-methylbut-2-enyl diphosphate contacts are provided by Ser231, Ser232, Asn233, and Ser276. Residues Ser231, Ser232, Asn233, and Ser276 each coordinate dimethylallyl diphosphate. Ser231, Ser232, Asn233, and Ser276 together coordinate isopentenyl diphosphate. Positions 320–340 (KARGEPLTRSATAGDRMNADR) are disordered.

This sequence belongs to the IspH family. The cofactor is [4Fe-4S] cluster.

The enzyme catalyses isopentenyl diphosphate + 2 oxidized [2Fe-2S]-[ferredoxin] + H2O = (2E)-4-hydroxy-3-methylbut-2-enyl diphosphate + 2 reduced [2Fe-2S]-[ferredoxin] + 2 H(+). It catalyses the reaction dimethylallyl diphosphate + 2 oxidized [2Fe-2S]-[ferredoxin] + H2O = (2E)-4-hydroxy-3-methylbut-2-enyl diphosphate + 2 reduced [2Fe-2S]-[ferredoxin] + 2 H(+). Its pathway is isoprenoid biosynthesis; dimethylallyl diphosphate biosynthesis; dimethylallyl diphosphate from (2E)-4-hydroxy-3-methylbutenyl diphosphate: step 1/1. It participates in isoprenoid biosynthesis; isopentenyl diphosphate biosynthesis via DXP pathway; isopentenyl diphosphate from 1-deoxy-D-xylulose 5-phosphate: step 6/6. Its function is as follows. Catalyzes the conversion of 1-hydroxy-2-methyl-2-(E)-butenyl 4-diphosphate (HMBPP) into a mixture of isopentenyl diphosphate (IPP) and dimethylallyl diphosphate (DMAPP). Acts in the terminal step of the DOXP/MEP pathway for isoprenoid precursor biosynthesis. The chain is 4-hydroxy-3-methylbut-2-enyl diphosphate reductase from Acidothermus cellulolyticus (strain ATCC 43068 / DSM 8971 / 11B).